The primary structure comprises 120 residues: Large ribosomal subunit protein bL17 (120 aa).

Belongs to the bacterial ribosomal protein bL17 family. Part of the 50S ribosomal subunit. Contacts protein L32.

In Geobacillus kaustophilus (strain HTA426), this protein is Large ribosomal subunit protein bL17.